Reading from the N-terminus, the 312-residue chain is Methionyl-tRNA formyltransferase (312 aa).

109-112 (SILP) lines the (6S)-5,6,7,8-tetrahydrofolate pocket.

The protein belongs to the Fmt family.

The catalysed reaction is L-methionyl-tRNA(fMet) + (6R)-10-formyltetrahydrofolate = N-formyl-L-methionyl-tRNA(fMet) + (6S)-5,6,7,8-tetrahydrofolate + H(+). Its function is as follows. Attaches a formyl group to the free amino group of methionyl-tRNA(fMet). The formyl group appears to play a dual role in the initiator identity of N-formylmethionyl-tRNA by promoting its recognition by IF2 and preventing the misappropriation of this tRNA by the elongation apparatus. This chain is Methionyl-tRNA formyltransferase, found in Dictyoglomus thermophilum (strain ATCC 35947 / DSM 3960 / H-6-12).